Here is a 615-residue protein sequence, read N- to C-terminus: Pentatricopeptide repeat-containing protein At2g25580 (615 aa).

A disordered region spans residues 40-98 (FGNSNDSSEMNPREGYNGRIQNRTGSSGEVSESIHTQSQSLGSNQGRNEQSWKQSPSLS). The span at 58–98 (RIQNRTGSSGEVSESIHTQSQSLGSNQGRNEQSWKQSPSLS) shows a compositional bias: polar residues. 4 PPR repeats span residues 288–318 (DLSSNHVLLEMYSNCGLANEAASVFEKMSEK), 319–353 (NLETWCIIIRCFAKNGFGEDAIDMFSRFKEEGNIP), 354–389 (DGQLFRGIFYACGMLGDVDEGLLHFESMSRDYGIAP), and 390–420 (SIEDYVSLVEMYALPGFLDEALEFVERMPME). A type E(+) motif region spans residues 490–520 (SSMQEFRAGDTNLPENDELFQLLRNLKMHMV). The tract at residues 521–615 (EVGYVAETRM…NGACTCKDYW (95 aa)) is type DYW motif.

It belongs to the PPR family. PCMP-H subfamily.

This chain is Pentatricopeptide repeat-containing protein At2g25580 (PCMP-H75), found in Arabidopsis thaliana (Mouse-ear cress).